The primary structure comprises 338 residues: Phenylalanine--tRNA ligase alpha subunit (338 aa).

Glutamate 253 contacts Mg(2+).

The protein belongs to the class-II aminoacyl-tRNA synthetase family. Phe-tRNA synthetase alpha subunit type 1 subfamily. Tetramer of two alpha and two beta subunits. The cofactor is Mg(2+).

The protein resides in the cytoplasm. It catalyses the reaction tRNA(Phe) + L-phenylalanine + ATP = L-phenylalanyl-tRNA(Phe) + AMP + diphosphate + H(+). The polypeptide is Phenylalanine--tRNA ligase alpha subunit (Citrifermentans bemidjiense (strain ATCC BAA-1014 / DSM 16622 / JCM 12645 / Bem) (Geobacter bemidjiensis)).